The sequence spans 113 residues: Na(+)/H(+) antiporter subunit C1 (113 aa).

Transmembrane regions (helical) follow at residues 1-21 (MEII…YLVL), 28-48 (IVMG…TMGG), and 72-92 (LILT…VLAF).

The protein belongs to the CPA3 antiporters (TC 2.A.63) subunit C family. May form a heterooligomeric complex that consists of seven subunits: mnhA1, mnhB1, mnhC1, mnhD1, mnhE1, mnhF1 and mnhG1.

It is found in the cell membrane. Functionally, mnh complex is a Na(+)/H(+) antiporter involved in Na(+) excretion. This Staphylococcus aureus (strain JH1) protein is Na(+)/H(+) antiporter subunit C1 (mnhC1).